A 64-amino-acid chain; its full sequence is Large ribosomal subunit protein bL35 (64 aa).

This sequence belongs to the bacterial ribosomal protein bL35 family.

The polypeptide is Large ribosomal subunit protein bL35 (Shewanella sediminis (strain HAW-EB3)).